The following is a 405-amino-acid chain: MESKIYTVSEVTGRITELLTSDSVLNDLWITGEISNFHHHNSGHMYFTIKDERSCIKSIMFRGYNRKLKFEPEDGLKVNAHGYVGVYKPRGDYQFYVDHLEPAGKGALYLAFEQLKEKLEKEGLFNEDHKKEIPLLPRKIGVVTSPTGAAIRDILSVVKRRFKNVSVLIVPSLVQGKKAAREIVEGIEYLNSRDDIDVIIVSRGGGSIEELWSFNEEVVARAIYNSRIPVISGVGHETDFTIADFVADLRAPTPSAAAELAISNRIELEKHLVNLYTRLYNSVSYQIKSYRDRLNSLSLKKVLTRPEELFIQKIQYVDELSRRLDWAMEGRLKDAREKFRVLSGKLDSLSPLKTIERGYSITLKGSEPINSITQVDIGDVIRSRLSDGIILSQVKRTMKEGEQDG.

This sequence belongs to the XseA family. As to quaternary structure, heterooligomer composed of large and small subunits.

The protein resides in the cytoplasm. The catalysed reaction is Exonucleolytic cleavage in either 5'- to 3'- or 3'- to 5'-direction to yield nucleoside 5'-phosphates.. Bidirectionally degrades single-stranded DNA into large acid-insoluble oligonucleotides, which are then degraded further into small acid-soluble oligonucleotides. This is Exodeoxyribonuclease 7 large subunit from Halothermothrix orenii (strain H 168 / OCM 544 / DSM 9562).